The primary structure comprises 255 residues: 5-oxoprolinase subunit A (255 aa).

The protein belongs to the LamB/PxpA family. As to quaternary structure, forms a complex composed of PxpA, PxpB and PxpC.

The enzyme catalyses 5-oxo-L-proline + ATP + 2 H2O = L-glutamate + ADP + phosphate + H(+). Functionally, catalyzes the cleavage of 5-oxoproline to form L-glutamate coupled to the hydrolysis of ATP to ADP and inorganic phosphate. In Clostridium kluyveri (strain ATCC 8527 / DSM 555 / NBRC 12016 / NCIMB 10680 / K1), this protein is 5-oxoprolinase subunit A.